The following is a 294-amino-acid chain: tRNA pseudouridine synthase B (294 aa).

The active-site Nucleophile is the D39.

This sequence belongs to the pseudouridine synthase TruB family. Type 1 subfamily.

The catalysed reaction is uridine(55) in tRNA = pseudouridine(55) in tRNA. In terms of biological role, responsible for synthesis of pseudouridine from uracil-55 in the psi GC loop of transfer RNAs. The sequence is that of tRNA pseudouridine synthase B from Streptococcus agalactiae serotype Ia (strain ATCC 27591 / A909 / CDC SS700).